A 331-amino-acid polypeptide reads, in one-letter code: FMRFamide-related neuropeptides (331 aa).

Positions 1 to 25 are cleaved as a signal peptide; it reads MRCWSPCSLLVVIVIYCLSSHTSEA. A propeptide spanning residues 26–65 is cleaved from the precursor; the sequence is FDLAQACVESQRLSLLPICDTIFAVQQEGVQQSADDGMRS. Phenylalanine amide occurs at positions 71 and 83. The propeptide occupies 86-94; the sequence is NVPDLPFED. Phenylalanine 100 carries the post-translational modification Phenylalanine amide. Positions 103–168 are excised as a propeptide; the sequence is AAPQLDELLK…YIDDVEDSDV (66 aa). The segment at 122–158 is disordered; it reads QKADETSVRRKRSTDAAPQNNAENPEQKNDSAKITKR. Over residues 146-158 the composition is skewed to basic and acidic residues; that stretch reads PEQKNDSAKITKR. Phenylalanine 174 and phenylalanine 181 each carry phenylalanine amide. Residues 184-194 constitute a propeptide that is removed on maturation; it reads NPSDVGNKLTE. Phenylalanine 200 is modified (phenylalanine amide). Residues 203–205 constitute a propeptide that is removed on maturation; that stretch reads DPE. Phenylalanine 211 is subject to Phenylalanine amide. The propeptide occupies 214 to 216; that stretch reads SDD. Phenylalanine 222 carries the phenylalanine amide modification. Residues 225–236 constitute a propeptide that is removed on maturation; that stretch reads NPSDAEDELEED. Phenylalanine 242 is subject to Phenylalanine amide. Positions 245–254 are excised as a propeptide; the sequence is GGEDDEEEAE. At phenylalanine 260 the chain carries Phenylalanine amide. Residues 263–265 constitute a propeptide that is removed on maturation; that stretch reads DPE. A Phenylalanine amide modification is found at phenylalanine 271. Positions 274–277 are excised as a propeptide; the sequence is SGED. Residues 279–296 show a composition bias toward basic and acidic residues; it reads RFMRFGRNPDEQEADKRF. The tract at residues 279 to 310 is disordered; sequence RFMRFGRNPDEQEADKRFMRFGRGGEDDEVST. Phenylalanine 283 is subject to Phenylalanine amide. Residues 286–293 constitute a propeptide that is removed on maturation; sequence NPDEQEAD. Phenylalanine 299 is subject to Phenylalanine amide. Positions 302 to 312 are excised as a propeptide; that stretch reads GGEDDEVSTED. Phenylalanine 318 carries the post-translational modification Phenylalanine amide. The propeptide occupies 321–331; that stretch reads SADKCKGCLEG.

Belongs to the FARP (FMRFamide related peptide) family.

The protein resides in the secreted. Excitatory neurotransmitters that directly modulate chromatophore function by activating chromatophore expansion at the chromatophore neuromuscular junction. This Doryteuthis opalescens (California market squid) protein is FMRFamide-related neuropeptides.